Here is a 676-residue protein sequence, read N- to C-terminus: RNA helicase NPH-II (676 aa).

The 176-residue stretch at Phe-172–His-347 folds into the Helicase ATP-binding domain. Residue Gly-185–Thr-192 coordinates ATP. Positions Asp-296–His-299 match the DEXH box motif. Residues Asn-366–Asn-535 form the Helicase C-terminal domain.

It belongs to the DEAD box helicase family. DEAH subfamily. In terms of assembly, monomer.

It is found in the virion. The enzyme catalyses ATP + H2O = ADP + phosphate + H(+). In terms of biological role, NTP-dependent helicase that catalyzes unidirectional unwinding of 3'tailed duplex RNAs and plays an important role during transcription of early mRNAs, presumably by preventing R-loop formation behind the elongating RNA polymerase. Might also play a role in the export of newly synthesized mRNA chains out of the core into the cytoplasm. Required for replication and propagation of viral particles. The polypeptide is RNA helicase NPH-II (OPG084) (Vaccinia virus (strain Ankara) (VACV)).